The primary structure comprises 244 residues: Carbonic anhydrase (244 aa).

A signal peptide spans 1-19; it reads MKGKFSIALMLSACFSASA. Positions 23 to 244 constitute an Alpha-carbonic anhydrase domain; the sequence is VHWGYEGSGD…QPLNGRIIIH (222 aa). The cysteines at positions 46 and 199 are disulfide-linked. His84 functions as the Proton acceptor in the catalytic mechanism. Zn(2+)-binding residues include His109, His111, and His128. Position 195–196 (195–196) interacts with substrate; that stretch reads TT.

Belongs to the alpha-carbonic anhydrase family. The cofactor is Zn(2+).

It is found in the periplasm. The catalysed reaction is hydrogencarbonate + H(+) = CO2 + H2O. Reversible hydration of carbon dioxide. This Pectobacterium atrosepticum (strain SCRI 1043 / ATCC BAA-672) (Erwinia carotovora subsp. atroseptica) protein is Carbonic anhydrase (cah).